We begin with the raw amino-acid sequence, 342 residues long: Flotillin-like protein FloA (342 aa).

2 helical membrane-spanning segments follow: residues 18–38 (FFIFVLAIVLLIILSVIGKFI) and 39–59 (SLWFQAFVSGTPIPLFNIIGM).

Belongs to the flotillin-like FloA family. Homooligomerizes.

The protein localises to the cell membrane. It localises to the membrane raft. Found in functional membrane microdomains (FMM) that may be equivalent to eukaryotic membrane rafts. FMMs are highly dynamic and increase in number as cells age. Flotillins are thought to be important factors in membrane fluidity. In Protochlamydia amoebophila (strain UWE25), this protein is Flotillin-like protein FloA.